The primary structure comprises 704 residues: Elongation factor G (704 aa).

The 284-residue stretch at 8 to 291 (DKVRNIGIMA…AVVEYLASPV (284 aa)) folds into the tr-type G domain. Residues 17–24 (AHIDAGKT), 90–94 (DTPGH), and 144–147 (NKMD) each bind GTP.

Belongs to the TRAFAC class translation factor GTPase superfamily. Classic translation factor GTPase family. EF-G/EF-2 subfamily.

The protein resides in the cytoplasm. Its function is as follows. Catalyzes the GTP-dependent ribosomal translocation step during translation elongation. During this step, the ribosome changes from the pre-translocational (PRE) to the post-translocational (POST) state as the newly formed A-site-bound peptidyl-tRNA and P-site-bound deacylated tRNA move to the P and E sites, respectively. Catalyzes the coordinated movement of the two tRNA molecules, the mRNA and conformational changes in the ribosome. The protein is Elongation factor G of Chlorobium phaeobacteroides (strain DSM 266 / SMG 266 / 2430).